Reading from the N-terminus, the 244-residue chain is Small ribosomal subunit protein uS2 (244 aa).

This sequence belongs to the universal ribosomal protein uS2 family.

In Exiguobacterium sibiricum (strain DSM 17290 / CCUG 55495 / CIP 109462 / JCM 13490 / 255-15), this protein is Small ribosomal subunit protein uS2.